Here is a 59-residue protein sequence, read N- to C-terminus: MTQVIVGENEGVESALRRFKREVSKAGIFNDLKRIRHHETPVEKYKRKQRLKNRTKRRR.

Residues 39 to 59 are disordered; that stretch reads ETPVEKYKRKQRLKNRTKRRR. Residues 45-59 are compositionally biased toward basic residues; sequence YKRKQRLKNRTKRRR.

It belongs to the bacterial ribosomal protein bS21 family.

The chain is Small ribosomal subunit protein bS21 from Prochlorococcus marinus (strain SARG / CCMP1375 / SS120).